The primary structure comprises 314 residues: uncharacterized protein (314 aa).

The interval 1-71 (MAGNSQRRGA…QRAGRKADET (71 aa)) is disordered. Residues Gly266, Ile286, and Leu295 each contribute to the S-adenosyl-L-methionine site.

This sequence belongs to the class IV-like SAM-binding methyltransferase superfamily. RNA methyltransferase TrmH family.

This is an uncharacterized protein from Mycolicibacterium smegmatis (strain ATCC 700084 / mc(2)155) (Mycobacterium smegmatis).